The sequence spans 204 residues: MITVALPKGRIAEDTLEIFRKIFGSSFMFEDRKLILEEGNFRFLMVRNQDIPTYVTEGAADIGVVGLDVLEEHKPNVVRLLDLQIGKCKVCIGIKNEEELDFSRSELKIATKMPNITRNYFAKLAVGVKIIKLYGSIELAPLVGLSDAIVDVVETGSTMKQNGLKVAGDIMQSSAYLIANKNSFIIKKDEILELYQKIKDEISK.

The protein belongs to the ATP phosphoribosyltransferase family. Short subfamily. Heteromultimer composed of HisG and HisZ subunits.

It is found in the cytoplasm. The catalysed reaction is 1-(5-phospho-beta-D-ribosyl)-ATP + diphosphate = 5-phospho-alpha-D-ribose 1-diphosphate + ATP. The protein operates within amino-acid biosynthesis; L-histidine biosynthesis; L-histidine from 5-phospho-alpha-D-ribose 1-diphosphate: step 1/9. In terms of biological role, catalyzes the condensation of ATP and 5-phosphoribose 1-diphosphate to form N'-(5'-phosphoribosyl)-ATP (PR-ATP). Has a crucial role in the pathway because the rate of histidine biosynthesis seems to be controlled primarily by regulation of HisG enzymatic activity. In Campylobacter concisus (strain 13826), this protein is ATP phosphoribosyltransferase.